We begin with the raw amino-acid sequence, 201 residues long: Large ribosomal subunit protein uL4 (201 aa).

Residues G42–R67 are disordered.

The protein belongs to the universal ribosomal protein uL4 family. Part of the 50S ribosomal subunit.

One of the primary rRNA binding proteins, this protein initially binds near the 5'-end of the 23S rRNA. It is important during the early stages of 50S assembly. It makes multiple contacts with different domains of the 23S rRNA in the assembled 50S subunit and ribosome. Its function is as follows. Forms part of the polypeptide exit tunnel. This chain is Large ribosomal subunit protein uL4, found in Legionella pneumophila (strain Paris).